The sequence spans 159 residues: Ribosomal RNA large subunit methyltransferase H (159 aa).

2 residues coordinate S-adenosyl-L-methionine: leucine 76 and glycine 108.

This sequence belongs to the RNA methyltransferase RlmH family. In terms of assembly, homodimer.

Its subcellular location is the cytoplasm. The enzyme catalyses pseudouridine(1915) in 23S rRNA + S-adenosyl-L-methionine = N(3)-methylpseudouridine(1915) in 23S rRNA + S-adenosyl-L-homocysteine + H(+). Functionally, specifically methylates the pseudouridine at position 1915 (m3Psi1915) in 23S rRNA. The protein is Ribosomal RNA large subunit methyltransferase H of Finegoldia magna (strain ATCC 29328 / DSM 20472 / WAL 2508) (Peptostreptococcus magnus).